We begin with the raw amino-acid sequence, 300 residues long: GPKCPFNSDTVSIIIETRENRNRDLYTLQTLQNHPEFKKKTITRPVVFITHGFTSSASEKNFINLAKALVDKDNYMVISIDWQTAACTNEYPGLKYAYYPTAASNTRLVGQYIATITQKLVKDYKISMANIRLIGHSLGAHVSGFAGKRVQELKLGKYSEIIGLDPARPSFDSNHCSERLCETDAEYVQIIHTSNYLGTEKILGTVDFYMNNGKNNPGCGRFFSEVCSHTRAVIYMAECIKHECCLIGIPRSKSSQPISRCTKQECVCVGLNAKKYPSRGSFYVPVESTAPFCNNKGKII.

The cysteines at positions 4 and 87 are disulfide-linked. The active-site Nucleophile is the S137. The Charge relay system role is filled by D165. 2 disulfides stabilise this stretch: C176–C181 and C219–C227. H229 acts as the Charge relay system in catalysis. Intrachain disulfides connect C244–C268, C245–C293, and C261–C266.

This sequence belongs to the AB hydrolase superfamily. Lipase family. As to expression, expressed by the venom gland.

It is found in the secreted. The catalysed reaction is a 1,2-diacyl-sn-glycero-3-phosphocholine + H2O = a 2-acyl-sn-glycero-3-phosphocholine + a fatty acid + H(+). In terms of biological role, catalyzes the hydrolysis of phosphatidylcholine with phospholipase A1 activity. May act as an allergen and induce hemolytic activity. The protein is Phospholipase A1 of Vespula maculifrons (Eastern yellow jacket).